Reading from the N-terminus, the 209-residue chain is Thymidylate kinase (209 aa).

Residue 10–17 (GLDGAGKS) participates in ATP binding.

It belongs to the thymidylate kinase family.

It catalyses the reaction dTMP + ATP = dTDP + ADP. In terms of biological role, phosphorylation of dTMP to form dTDP in both de novo and salvage pathways of dTTP synthesis. The sequence is that of Thymidylate kinase from Francisella tularensis subsp. holarctica (strain OSU18).